Here is a 235-residue protein sequence, read N- to C-terminus: LexA repressor (235 aa).

Residues phenylalanine 26–threonine 46 constitute a DNA-binding region (H-T-H motif). The tract at residues glutamine 72–glutamine 104 is disordered. Catalysis depends on for autocatalytic cleavage activity residues serine 156 and lysine 193.

It belongs to the peptidase S24 family. Homodimer.

It carries out the reaction Hydrolysis of Ala-|-Gly bond in repressor LexA.. Its function is as follows. Represses a number of genes involved in the response to DNA damage (SOS response), including recA and lexA. In the presence of single-stranded DNA, RecA interacts with LexA causing an autocatalytic cleavage which disrupts the DNA-binding part of LexA, leading to derepression of the SOS regulon and eventually DNA repair. The polypeptide is LexA repressor (Caulobacter sp. (strain K31)).